The primary structure comprises 814 residues: Spore development regulator umv1 (814 aa).

Disordered regions lie at residues 1 to 36 (MSRP…GSTE), 96 to 134 (HDRP…VRRG), 267 to 333 (QGLK…MPRS), 407 to 441 (PPRD…RAGP), 457 to 501 (PVRS…ASLT), and 539 to 814 (QSSG…NQPY). Residues 7–18 (RSGNASTPQGTS) are compositionally biased toward polar residues. Positions 53–274 (RDHIEYQLTV…AEQGLKVRVR (222 aa)) constitute a Velvet domain. Over residues 271 to 285 (VRVRKHPRSRRRGSK) the composition is skewed to basic residues. Residues 407–423 (PPRDFADGRYMDGDYPP) show a composition bias toward basic and acidic residues. The Nuclear localization signal motif lies at 438-445 (RAGPSEYS). Low complexity predominate over residues 620–631 (AAARRSPIPSAR). 2 stretches are compositionally biased toward basic and acidic residues: residues 723–741 (TRDR…DRDQ) and 760–796 (GELD…RRDF). A compositionally biased stretch (polar residues) spans 800 to 814 (TMPSKPSSRGHNQPY).

It belongs to the velvet family. VosA subfamily. As to quaternary structure, forms a heterodimeric complex with velB; the formation of the VEL2-VOS1 complex is light-dependent.

The protein resides in the nucleus. Its function is as follows. Component of the velB-VosA heterodimeric complex that plays a dual role in activating genes associated with spore maturation and repressing certain development-associated genes. The complex binds DNA through the DNA-binding domain of vosA that recognizes an 11-nucleotide consensus sequence 5'-CTGGCCGCGGC-3' consisting of two motifs in the promoters of key developmental regulatory genes. Required for gall induction and teliospore formation on seedlings. The chain is Spore development regulator umv1 from Mycosarcoma maydis (Corn smut fungus).